We begin with the raw amino-acid sequence, 218 residues long: Thiopurine S-methyltransferase (218 aa).

S-adenosyl-L-methionine contacts are provided by tryptophan 10, leucine 45, glutamate 66, and arginine 123.

The protein belongs to the class I-like SAM-binding methyltransferase superfamily. TPMT family.

The protein resides in the cytoplasm. It carries out the reaction S-adenosyl-L-methionine + a thiopurine = S-adenosyl-L-homocysteine + a thiopurine S-methylether.. The polypeptide is Thiopurine S-methyltransferase (Shewanella sp. (strain ANA-3)).